The chain runs to 427 residues: Indole diterpene prenyltransferase ptmD (427 aa).

77-78 (YV) is an L-tryptophan binding site. R99, K186, Y188, R259, K261, Y263, Y344, Y409, and Y413 together coordinate substrate.

Belongs to the tryptophan dimethylallyltransferase family.

It functions in the pathway secondary metabolite biosynthesis. Indole diterpene prenyltransferase; part of the gene cluster that mediates the biosynthesis of the indole diterpenes penitrems. The geranylgeranyl diphosphate (GGPP) synthase ptmG catalyzes the first step in penitrem biosynthesis via conversion of farnesyl pyrophosphate and isopentyl pyrophosphate into geranylgeranyl pyrophosphate (GGPP). Condensation of indole-3-glycerol phosphate with GGPP by the prenyl transferase ptmC then forms 3-geranylgeranylindole (3-GGI). Epoxidation by the FAD-dependent monooxygenase ptmM leads to a epoxidized-GGI that is substrate of the terpene cyclase ptmB for cyclization to yield paspaline. Paspaline is subsequently converted to 13-desoxypaxilline by the cytochrome P450 monooxygenase ptmP, the latter being then converted to paxilline by the cytochrome P450 monooxygenase ptmQ. Paxilline is converted to beta-paxitriol via C-10 ketoreduction by the short-chain dehydrogenase ptmH which can be monoprenylated at the C-20 by the indole diterpene prenyltransferase ptmD. A two-step elimination (acetylation and elimination) process performed by the O-acetyltransferase ptmV and ptmI leads to the production of the prenylated form of penijanthine. The FAD-linked oxidoreductase ptmO then converts the prenylated form of penijanthine into PC-M5 which is in turn transformed into PC-M4 by the aromatic dimethylallyltransferase ptmE. Five sequential oxidative transformations performed by the cytochrome P450 monooxygenases ptmK, ptmU, ptmL, ptmN and ptmJ yield the various penitrem compounds. PtmK, ptmU and ptmM are involved in the formation of the key bicyclic ring of penitrem C via the formation of the intermediates secopenitrem D and penitrem D. PtmL catalyzes the epoxidation of penitrem D and C to yield penitrem B and F, respectively. PtmJ catalyzes the last benzylic hydroxylation to convert penitrem B to prenitrem E and penitrem F to penitrem A. The chain is Indole diterpene prenyltransferase ptmD from Penicillium ochrochloron.